The sequence spans 219 residues: Large ribosomal subunit protein uL3 (219 aa).

Residues 140–163 (SASHGAHRNHRKPGSIGASSTPSR) form a disordered region.

It belongs to the universal ribosomal protein uL3 family. Part of the 50S ribosomal subunit. Forms a cluster with proteins L14 and L19.

Its function is as follows. One of the primary rRNA binding proteins, it binds directly near the 3'-end of the 23S rRNA, where it nucleates assembly of the 50S subunit. This Leifsonia xyli subsp. xyli (strain CTCB07) protein is Large ribosomal subunit protein uL3.